A 214-amino-acid chain; its full sequence is Ribosomal RNA small subunit methyltransferase G (214 aa).

S-adenosyl-L-methionine is bound by residues Gly-73, Leu-78, 124–125 (VE), and Arg-139.

It belongs to the methyltransferase superfamily. RNA methyltransferase RsmG family.

Its subcellular location is the cytoplasm. It carries out the reaction guanosine(527) in 16S rRNA + S-adenosyl-L-methionine = N(7)-methylguanosine(527) in 16S rRNA + S-adenosyl-L-homocysteine. Functionally, specifically methylates the N7 position of guanine in position 527 of 16S rRNA. The sequence is that of Ribosomal RNA small subunit methyltransferase G from Aeromonas hydrophila subsp. hydrophila (strain ATCC 7966 / DSM 30187 / BCRC 13018 / CCUG 14551 / JCM 1027 / KCTC 2358 / NCIMB 9240 / NCTC 8049).